The following is a 510-amino-acid chain: Bifunctional purine biosynthesis protein PurH (510 aa).

Residues 1 to 142 (MRALLSVSDK…KNYKDVMVLC (142 aa)) enclose the MGS-like domain.

Belongs to the PurH family.

The enzyme catalyses (6R)-10-formyltetrahydrofolate + 5-amino-1-(5-phospho-beta-D-ribosyl)imidazole-4-carboxamide = 5-formamido-1-(5-phospho-D-ribosyl)imidazole-4-carboxamide + (6S)-5,6,7,8-tetrahydrofolate. It carries out the reaction IMP + H2O = 5-formamido-1-(5-phospho-D-ribosyl)imidazole-4-carboxamide. Its pathway is purine metabolism; IMP biosynthesis via de novo pathway; 5-formamido-1-(5-phospho-D-ribosyl)imidazole-4-carboxamide from 5-amino-1-(5-phospho-D-ribosyl)imidazole-4-carboxamide (10-formyl THF route): step 1/1. It participates in purine metabolism; IMP biosynthesis via de novo pathway; IMP from 5-formamido-1-(5-phospho-D-ribosyl)imidazole-4-carboxamide: step 1/1. The chain is Bifunctional purine biosynthesis protein PurH from Campylobacter jejuni subsp. jejuni serotype O:2 (strain ATCC 700819 / NCTC 11168).